The chain runs to 327 residues: Phenylalanine--tRNA ligase alpha subunit (327 aa).

Glu-252 serves as a coordination point for Mg(2+).

This sequence belongs to the class-II aminoacyl-tRNA synthetase family. Phe-tRNA synthetase alpha subunit type 1 subfamily. As to quaternary structure, tetramer of two alpha and two beta subunits. Mg(2+) is required as a cofactor.

The protein resides in the cytoplasm. The catalysed reaction is tRNA(Phe) + L-phenylalanine + ATP = L-phenylalanyl-tRNA(Phe) + AMP + diphosphate + H(+). The protein is Phenylalanine--tRNA ligase alpha subunit of Serratia proteamaculans (strain 568).